Here is a 320-residue protein sequence, read N- to C-terminus: uncharacterized protein (320 aa).

The tract at residues 196 to 273 (VVPEYDFDSE…RSKNNSNTTK (78 aa)) is disordered. Residues 200–210 (YDFDSESESDN) show a composition bias toward acidic residues. Positions 211–226 (SEEKRFVPVLETEKAP) are enriched in basic and acidic residues. Positions 248-273 (QPKNPKQTTLKNTLDTRSKNNSNTTK) are enriched in polar residues.

This is an uncharacterized protein from Acanthamoeba polyphaga mimivirus (APMV).